A 181-amino-acid polypeptide reads, in one-letter code: Acetylcholinesterase (181 aa).

The active-site Acyl-ester intermediate is the serine 76. The Charge relay system role is filled by glutamate 132. Positions 162–181 (WQDQDNGGLPLTGNPTXPHN) are disordered.

Belongs to the type-B carboxylesterase/lipase family. In terms of processing, the N-terminus is blocked. Expressed by the venom gland. Is also probably expressed by liver and muscle.

Its subcellular location is the synapse. It is found in the secreted. The protein localises to the cell membrane. The catalysed reaction is acetylcholine + H2O = choline + acetate + H(+). In terms of biological role, in venom, its toxic role is unclear: it could result in less musculatory control by rapidly hydrolyzing acetylcholine, or that it works synergistically with alkaline phosphatase (ALP) in paralyzing prey through hypotension. In muscle, it terminates signal transduction at the neuromuscular junction by rapid hydrolysis of the acetylcholine released into the synaptic cleft. In liver, its function is unclear: it could serve as a safeguard against any diffusion of acetylcholine from synapses into the circulation. This chain is Acetylcholinesterase (ACHE), found in Naja oxiana (Central Asian cobra).